Reading from the N-terminus, the 230-residue chain is Ureidoacrylate amidohydrolase RutB (230 aa).

The active-site Proton acceptor is the Asp-24. The active site involves Lys-133. Cys-166 acts as the Nucleophile in catalysis.

The protein belongs to the isochorismatase family. RutB subfamily.

It catalyses the reaction (Z)-3-ureidoacrylate + H2O + H(+) = (Z)-3-aminoacrylate + NH4(+) + CO2. It carries out the reaction (Z)-3-ureidoacrylate + H2O = (Z)-3-aminoacrylate + carbamate + H(+). The catalysed reaction is (Z)-2-methylureidoacrylate + H2O + H(+) = (Z)-2-methylaminoacrylate + NH4(+) + CO2. In terms of biological role, hydrolyzes ureidoacrylate to form aminoacrylate and carbamate. The carbamate hydrolyzes spontaneously, thereby releasing one of the nitrogen atoms of the pyrimidine ring as ammonia and one of its carbon atoms as CO2. In Escherichia coli O7:K1 (strain IAI39 / ExPEC), this protein is Ureidoacrylate amidohydrolase RutB.